Consider the following 310-residue polypeptide: Apolipoprotein E (310 aa).

A signal peptide spans 1-18; that stretch reads MKVLWAALVVTLLAGCGA. Repeat copies occupy residues 77 to 98, 99 to 120, 121 to 142, 143 to 164, 165 to 186, 187 to 208, 209 to 226, and 227 to 248. Residues 77–248 form an 8 X 22 AA approximate tandem repeats region; it reads ALMDDTMKEV…RLDEVREQVQ (172 aa). An LDL and other lipoprotein receptors binding region spans residues 155–165; sequence HLRKMRKRLLR. Position 159–162 (159–162) interacts with heparin; that stretch reads MRKR. The segment at 207–283 is lipid-binding and lipoprotein association; that stretch reads HTLVSKPLQE…SWFEPLVQDM (77 aa). 222-229 is a binding site for heparin; the sequence is AQRLRGRL. The segment at 259 to 310 is homooligomerization; that stretch reads NQVRLQAEAFQGRLKSWFEPLVQDMQQKWAELVEKVQLAVGAVPTSVPSEKQ. The segment at 271–283 is specificity for association with VLDL; it reads RLKSWFEPLVQDM.

Belongs to the apolipoprotein A1/A4/E family. Homotetramer. May interact with ABCA1; functionally associated with ABCA1 in the biogenesis of HDLs. May interact with APP/A4 amyloid-beta peptide; the interaction is extremely stable in vitro but its physiological significance is unclear. May interact with MAPT. May interact with MAP2. In the cerebrospinal fluid, interacts with secreted SORL1. Interacts with PMEL; this allows the loading of PMEL luminal fragment on ILVs to induce fibril nucleation. In terms of processing, APOE exists as multiple glycosylated and sialylated glycoforms within cells and in plasma. The extent of glycosylation and sialylation are tissue and context specific. Glycated in plasma VLDL. Post-translationally, phosphorylated by FAM20C in the extracellular medium.

It localises to the secreted. The protein resides in the extracellular space. The protein localises to the extracellular matrix. It is found in the extracellular vesicle. Its subcellular location is the endosome. It localises to the multivesicular body. Functionally, APOE is an apolipoprotein, a protein associating with lipid particles, that mainly functions in lipoprotein-mediated lipid transport between organs via the plasma and interstitial fluids. APOE is a core component of plasma lipoproteins and is involved in their production, conversion and clearance. Apolipoproteins are amphipathic molecules that interact both with lipids of the lipoprotein particle core and the aqueous environment of the plasma. As such, APOE associates with chylomicrons, chylomicron remnants, very low density lipoproteins (VLDL) and intermediate density lipoproteins (IDL) but shows a preferential binding to high-density lipoproteins (HDL). It also binds a wide range of cellular receptors including the LDL receptor/LDLR and the very low-density lipoprotein receptor/VLDLR that mediate the cellular uptake of the APOE-containing lipoprotein particles. Finally, APOE also has a heparin-binding activity and binds heparan-sulfate proteoglycans on the surface of cells, a property that supports the capture and the receptor-mediated uptake of APOE-containing lipoproteins by cells. The sequence is that of Apolipoprotein E (APOE) from Ceratotherium simum cottoni (Northern white rhinoceros).